Here is a 555-residue protein sequence, read N- to C-terminus: Dihydroxy-acid dehydratase (555 aa).

D78 is a binding site for Mg(2+). [2Fe-2S] cluster is bound at residue C119. Residues D120 and K121 each coordinate Mg(2+). K121 bears the N6-carboxylysine mark. C191 lines the [2Fe-2S] cluster pocket. Mg(2+) is bound at residue E444. The Proton acceptor role is filled by S470.

The protein belongs to the IlvD/Edd family. In terms of assembly, homodimer. Requires [2Fe-2S] cluster as cofactor. It depends on Mg(2+) as a cofactor.

The enzyme catalyses (2R)-2,3-dihydroxy-3-methylbutanoate = 3-methyl-2-oxobutanoate + H2O. It catalyses the reaction (2R,3R)-2,3-dihydroxy-3-methylpentanoate = (S)-3-methyl-2-oxopentanoate + H2O. It participates in amino-acid biosynthesis; L-isoleucine biosynthesis; L-isoleucine from 2-oxobutanoate: step 3/4. The protein operates within amino-acid biosynthesis; L-valine biosynthesis; L-valine from pyruvate: step 3/4. Functionally, functions in the biosynthesis of branched-chain amino acids. Catalyzes the dehydration of (2R,3R)-2,3-dihydroxy-3-methylpentanoate (2,3-dihydroxy-3-methylvalerate) into 2-oxo-3-methylpentanoate (2-oxo-3-methylvalerate) and of (2R)-2,3-dihydroxy-3-methylbutanoate (2,3-dihydroxyisovalerate) into 2-oxo-3-methylbutanoate (2-oxoisovalerate), the penultimate precursor to L-isoleucine and L-valine, respectively. This chain is Dihydroxy-acid dehydratase, found in Maridesulfovibrio salexigens (strain ATCC 14822 / DSM 2638 / NCIMB 8403 / VKM B-1763) (Desulfovibrio salexigens).